Here is a 231-residue protein sequence, read N- to C-terminus: UPF0758 protein pc1765 (231 aa).

One can recognise an MPN domain in the interval 107–229 (LIEHSSHAYQ…YVSFKDQNLL (123 aa)). Zn(2+) is bound by residues histidine 178, histidine 180, and aspartate 191. The JAMM motif signature appears at 178–191 (HNHPSGDPMPSNQD).

This sequence belongs to the UPF0758 family.

This is UPF0758 protein pc1765 from Protochlamydia amoebophila (strain UWE25).